The sequence spans 150 residues: Linear element protein rec25 (150 aa).

At Ser-11 the chain carries Phosphoserine.

In terms of assembly, component of linear elements (LinEs), which are similar to synaptonemal complexes, at least composed of rec27, rec25, rec10 and mug20. Interacts with rec10; the interaction is direct.

It localises to the cytoplasm. The protein localises to the nucleus. The protein resides in the chromosome. Functionally, during meiotic DNA recombination, binds to and may help activate DNA double-strand break (DSB) hotspot sites. The sequence is that of Linear element protein rec25 from Schizosaccharomyces pombe (strain 972 / ATCC 24843) (Fission yeast).